We begin with the raw amino-acid sequence, 274 residues long: UPF0173 metal-dependent hydrolase AnaeK_1127 (274 aa).

The protein belongs to the UPF0173 family.

In Anaeromyxobacter sp. (strain K), this protein is UPF0173 metal-dependent hydrolase AnaeK_1127.